We begin with the raw amino-acid sequence, 482 residues long: tRNA sulfurtransferase (482 aa).

The region spanning 61-165 (SAIRDALTRI…QDRLLLIKGR (105 aa)) is the THUMP domain. Residues 183-184 (LI), K265, G287, and Q296 contribute to the ATP site. An intrachain disulfide couples C344 to C456. The Rhodanese domain maps to 404-482 (FAPTDVLLDI…GFSNVKVYRP (79 aa)). Catalysis depends on C456, which acts as the Cysteine persulfide intermediate.

Belongs to the ThiI family.

Its subcellular location is the cytoplasm. It catalyses the reaction [ThiI sulfur-carrier protein]-S-sulfanyl-L-cysteine + a uridine in tRNA + 2 reduced [2Fe-2S]-[ferredoxin] + ATP + H(+) = [ThiI sulfur-carrier protein]-L-cysteine + a 4-thiouridine in tRNA + 2 oxidized [2Fe-2S]-[ferredoxin] + AMP + diphosphate. The catalysed reaction is [ThiS sulfur-carrier protein]-C-terminal Gly-Gly-AMP + S-sulfanyl-L-cysteinyl-[cysteine desulfurase] + AH2 = [ThiS sulfur-carrier protein]-C-terminal-Gly-aminoethanethioate + L-cysteinyl-[cysteine desulfurase] + A + AMP + 2 H(+). The protein operates within cofactor biosynthesis; thiamine diphosphate biosynthesis. Its function is as follows. Catalyzes the ATP-dependent transfer of a sulfur to tRNA to produce 4-thiouridine in position 8 of tRNAs, which functions as a near-UV photosensor. Also catalyzes the transfer of sulfur to the sulfur carrier protein ThiS, forming ThiS-thiocarboxylate. This is a step in the synthesis of thiazole, in the thiamine biosynthesis pathway. The sulfur is donated as persulfide by IscS. This is tRNA sulfurtransferase from Pectobacterium carotovorum subsp. carotovorum (strain PC1).